A 359-amino-acid polypeptide reads, in one-letter code: tRNA N6-adenosine threonylcarbamoyltransferase (359 aa).

The Fe cation site is built by histidine 115 and histidine 119. Residues 137 to 141, aspartate 170, glycine 183, and asparagine 283 contribute to the substrate site; that span reads LVSGG. Aspartate 311 serves as a coordination point for Fe cation. The tract at residues 328 to 359 is disordered; that stretch reads APDSLDLAPRSRWPLDEKSAPLIGTGRRGAKA.

Belongs to the KAE1 / TsaD family. The cofactor is Fe(2+).

The protein localises to the cytoplasm. It carries out the reaction L-threonylcarbamoyladenylate + adenosine(37) in tRNA = N(6)-L-threonylcarbamoyladenosine(37) in tRNA + AMP + H(+). Its function is as follows. Required for the formation of a threonylcarbamoyl group on adenosine at position 37 (t(6)A37) in tRNAs that read codons beginning with adenine. Is involved in the transfer of the threonylcarbamoyl moiety of threonylcarbamoyl-AMP (TC-AMP) to the N6 group of A37, together with TsaE and TsaB. TsaD likely plays a direct catalytic role in this reaction. The sequence is that of tRNA N6-adenosine threonylcarbamoyltransferase from Brucella anthropi (strain ATCC 49188 / DSM 6882 / CCUG 24695 / JCM 21032 / LMG 3331 / NBRC 15819 / NCTC 12168 / Alc 37) (Ochrobactrum anthropi).